The following is a 310-amino-acid chain: Putative S-adenosyl-L-methionine-dependent methyltransferase MSMEG_1888/MSMEI_1848 (310 aa).

S-adenosyl-L-methionine contacts are provided by residues D128 and 157-158 (DL).

The protein belongs to the UPF0677 family.

In terms of biological role, exhibits S-adenosyl-L-methionine-dependent methyltransferase activity. The chain is Putative S-adenosyl-L-methionine-dependent methyltransferase MSMEG_1888/MSMEI_1848 from Mycolicibacterium smegmatis (strain ATCC 700084 / mc(2)155) (Mycobacterium smegmatis).